A 114-amino-acid chain; its full sequence is Large ribosomal subunit protein uL22 (114 aa).

Belongs to the universal ribosomal protein uL22 family. Part of the 50S ribosomal subunit.

Its function is as follows. This protein binds specifically to 23S rRNA; its binding is stimulated by other ribosomal proteins, e.g. L4, L17, and L20. It is important during the early stages of 50S assembly. It makes multiple contacts with different domains of the 23S rRNA in the assembled 50S subunit and ribosome. In terms of biological role, the globular domain of the protein is located near the polypeptide exit tunnel on the outside of the subunit, while an extended beta-hairpin is found that lines the wall of the exit tunnel in the center of the 70S ribosome. The sequence is that of Large ribosomal subunit protein uL22 from Streptococcus uberis (strain ATCC BAA-854 / 0140J).